The chain runs to 541 residues: Ascorbate transporter, chloroplastic (541 aa).

The transit peptide at 1-28 directs the protein to the chloroplast; that stretch reads MALGGLISNRNFGSFIGSGNGCQRLGKS. 11 helical membrane passes run 133–155, 170–190, 199–219, 221–241, 263–283, 286–306, 352–372, 390–410, 430–450, 481–501, and 515–535; these read VIVLLCFSSFLLCNMDRVNMSIA, VGLIQSSFFWGYLLTQILGGI, VVLGFGVVWWSFATIMTPIAA, LGLPFLLVVRAFMGIGEGVAM, LVYSGMYLGSVTGLAFSPMLI, FGWPSVFYSFGSLGSIWFLLW, VWALIISHFCHNWGTFILLTW, LLCVLPWLTMAVFANIGGWIA, IGFLGPAFFLSQLSHVKTPAM, AGVLLGLSNTAGVLAGVFGTA, and VFKVAVALYLIGTLVWNLFAT.

This sequence belongs to the major facilitator superfamily. Sodium/anion cotransporter (TC 2.A.1.14) family. As to expression, expressed in stems, developing siliques, leaf mesophyll cells and sepals of mature flowers. Not detected in roots. Detected in palisade tissue rather than spongy tissue from the leaves.

The protein localises to the plastid. Its subcellular location is the chloroplast inner membrane. With respect to regulation, insensitive to dehydroascorbate, p-isoascorbate, inorganic phosphate, glutamate, ATP, p-aminohippuric acid or tetraethylammonium. Functionally, inorganic phosphate and probable anion transporter. Ascorbate transporter bridging the chloroplast envelope. Transports ascorbate from the cytosol into the chloroplast. Requires chloride ions and the presence of an electrochemical potential across the membrane for activity. The chain is Ascorbate transporter, chloroplastic (PHT4;4) from Arabidopsis thaliana (Mouse-ear cress).